Here is a 211-residue protein sequence, read N- to C-terminus: 3-demethoxyubiquinol 3-hydroxylase (211 aa).

Glutamate 60, glutamate 90, histidine 93, glutamate 142, glutamate 174, and histidine 177 together coordinate Fe cation.

The protein belongs to the COQ7 family. Fe cation serves as cofactor.

It is found in the cell membrane. The enzyme catalyses a 5-methoxy-2-methyl-3-(all-trans-polyprenyl)benzene-1,4-diol + AH2 + O2 = a 3-demethylubiquinol + A + H2O. It participates in cofactor biosynthesis; ubiquinone biosynthesis. Its function is as follows. Catalyzes the hydroxylation of 2-nonaprenyl-3-methyl-6-methoxy-1,4-benzoquinol during ubiquinone biosynthesis. The sequence is that of 3-demethoxyubiquinol 3-hydroxylase from Herminiimonas arsenicoxydans.